Consider the following 313-residue polypeptide: Cytochrome f (313 aa).

The N-terminal stretch at 1-30 (MRNWSFSKAALTVSLLALSWSPFGPAEVQA) is a signal peptide. Heme is bound by residues Tyr-31, Cys-51, Cys-54, and His-55. The helical transmembrane segment at 279-298 (VQGLIIFFAFVLIAQVFLVL) threads the bilayer.

Belongs to the cytochrome f family. In terms of assembly, the 4 large subunits of the cytochrome b6-f complex are cytochrome b6, subunit IV (17 kDa polypeptide, petD), cytochrome f and the Rieske protein, while the 4 small subunits are PetG, PetL, PetM and PetN. The complex functions as a dimer. Heme is required as a cofactor.

The protein resides in the plastid. Its subcellular location is the chloroplast thylakoid membrane. Functionally, component of the cytochrome b6-f complex, which mediates electron transfer between photosystem II (PSII) and photosystem I (PSI), cyclic electron flow around PSI, and state transitions. This Nephroselmis olivacea (Green alga) protein is Cytochrome f.